A 740-amino-acid chain; its full sequence is Anaphase-promoting complex subunit 5 (740 aa).

Phosphoserine is present on S180. 13 TPR repeats span residues 194-234 (QKQA…FNPD), 235-285 (FAEA…GRSL), 286-322 (RYAA…SNDH), 323-363 (VCLQ…YLAS), 364-403 (LGIQ…SELI), 404-451 (DISI…TESF), 452-485 (AVAL…FPPN), 486-525 (SQHA…ALNG), 526-565 (IEGV…TEMV), 566-605 (ISVL…QYLA), 606-645 (SETV…VLDK), 646-681 (GRAM…NLSE), and 682-721 (AKNY…CAMI). Position 217 is a phosphothreonine (T217).

Belongs to the APC5 family. In terms of assembly, the mammalian APC/C is composed at least of 14 distinct subunits ANAPC1, ANAPC2, CDC27/APC3, ANAPC4, ANAPC5, CDC16/APC6, ANAPC7, CDC23/APC8, ANAPC10, ANAPC11, CDC26/APC12, ANAPC13, ANAPC15 and ANAPC16 that assemble into a complex of at least 19 chains with a combined molecular mass of around 1.2 MDa; APC/C interacts with FZR1 and FBXO5.

The protein localises to the nucleus. It localises to the cytoplasm. It is found in the cytoskeleton. Its subcellular location is the spindle. It participates in protein modification; protein ubiquitination. Component of the anaphase promoting complex/cyclosome (APC/C), a cell cycle-regulated E3 ubiquitin ligase that controls progression through mitosis and the G1 phase of the cell cycle. The APC/C complex acts by mediating ubiquitination and subsequent degradation of target proteins: it mainly mediates the formation of 'Lys-11'-linked polyubiquitin chains and, to a lower extent, the formation of 'Lys-48'- and 'Lys-63'-linked polyubiquitin chains. The APC/C complex catalyzes assembly of branched 'Lys-11'-/'Lys-48'-linked branched ubiquitin chains on target proteins. This Mus musculus (Mouse) protein is Anaphase-promoting complex subunit 5 (Anapc5).